The following is a 218-amino-acid chain: Large ribosomal subunit protein eL14 (218 aa).

Position 79 is an N6-acetyllysine (Lys79). Lys85 is modified (N6-acetyllysine; alternate). N6-succinyllysine; alternate is present on Lys85. Lys124 participates in a covalent cross-link: Glycyl lysine isopeptide (Lys-Gly) (interchain with G-Cter in SUMO2). A Phosphoserine modification is found at Ser139. Residues 159 to 218 are disordered; it reads VPAKKATAAGKKAAAQKAPAQKAPAQKAAGQKAAQPPKAQKGQKPPAQKAPAPKASGKKA. 6 repeat units span residues 174 to 178, 179 to 183, 184 to 188, 189 to 193, 196 to 198, and 199 to 201. The 4 X 5 AA tandem repeats of Q-K-A-[PAS]-X stretch occupies residues 174–193; the sequence is QKAPAQKAPAQKAAGQKAAQ. The segment at 196–201 is 2 X 3 AA tandem repeats of K-[GA]-Q; sequence KAQKGQ. Lys207 is subject to N6-succinyllysine.

The protein belongs to the eukaryotic ribosomal protein eL14 family. In terms of assembly, component of the large ribosomal subunit.

It is found in the cytoplasm. Its function is as follows. Component of the large ribosomal subunit. The ribosome is a large ribonucleoprotein complex responsible for the synthesis of proteins in the cell. The sequence is that of Large ribosomal subunit protein eL14 (RPL14) from Oryctolagus cuniculus (Rabbit).